The sequence spans 386 residues: Succinate--CoA ligase [ADP-forming] subunit beta (386 aa).

The ATP-grasp domain occupies 9–244; sequence KELLRQYGVA…LDEEDPKEIE (236 aa). Residues Lys46, 53–55, Glu99, Cys102, and Glu107 each bind ATP; that span reads GRG. Mg(2+) is bound by residues Asn199 and Asp213. Substrate contacts are provided by residues Asn264 and 321-323; that span reads GIM.

Belongs to the succinate/malate CoA ligase beta subunit family. Heterotetramer of two alpha and two beta subunits. Mg(2+) serves as cofactor.

The catalysed reaction is succinate + ATP + CoA = succinyl-CoA + ADP + phosphate. It carries out the reaction GTP + succinate + CoA = succinyl-CoA + GDP + phosphate. The protein operates within carbohydrate metabolism; tricarboxylic acid cycle; succinate from succinyl-CoA (ligase route): step 1/1. Its function is as follows. Succinyl-CoA synthetase functions in the citric acid cycle (TCA), coupling the hydrolysis of succinyl-CoA to the synthesis of either ATP or GTP and thus represents the only step of substrate-level phosphorylation in the TCA. The beta subunit provides nucleotide specificity of the enzyme and binds the substrate succinate, while the binding sites for coenzyme A and phosphate are found in the alpha subunit. The polypeptide is Succinate--CoA ligase [ADP-forming] subunit beta (Halalkalibacterium halodurans (strain ATCC BAA-125 / DSM 18197 / FERM 7344 / JCM 9153 / C-125) (Bacillus halodurans)).